The primary structure comprises 207 residues: Protein Nef (207 aa).

The N-myristoyl glycine; by host moiety is linked to residue Gly2. Ser6 carries the post-translational modification Phosphoserine; by host. Residues 62-66 form an acidic; interacts with host PACS1 and PACS2; stabilizes the interaction of NEF/MHC-I with host AP1M1; necessary for MHC-I internalization region; the sequence is EEDSD. Residues 70 to 79 are SH3-binding; interaction with Src family tyrosine kinases; the sequence is PVRPQVPLRP. The short motif at 73 to 76 is the PxxP; stabilizes the interaction of NEF/MHC-I with host AP1M1; necessary for MHC-I internalization element; sequence PQVP. A mediates dimerization, Nef-PTE1 interaction region spans residues 109–125; the sequence is DILDLWVYNTQGFFPDW. Residues 149–181 are binding to ATP6V1H; that stretch reads MDPAEIEEANKGENISLLHPICQHGMEDEDREV. The Dileucine internalization motif; necessary for CD4 internalization signature appears at 165-166; the sequence is LL. The Diacidic; necessary for CD4 internalization motif lies at 175 to 176; sequence ED.

The protein belongs to the lentivirus primate group Nef protein family. As to quaternary structure, monomer; cytosolic form. Homodimer; membrane bound form. Interacts with Nef associated p21-activated kinase (PAK2); this interaction activates PAK2. Associates with the Nef-MHC-I-AP1 complex; this complex is required for MHC-I internalization. Interacts (via C-terminus) with host PI3-kinase. Interacts with host PACS1; this interaction seems to be weak. Interacts with host PACS2. Interacts with host LCK and MAPK3; these interactions inhibit the kinase activity of the latter. Interacts with host ATP6V1H; this interaction may play a role in CD4 endocytosis. Associates with the CD4-Nef-AP2 complex; this complex is required for CD4 internalization. Interacts with host AP2 subunit alpha and AP2 subunit sigma2. Interacts with TCR-zeta chain; this interaction up-regulates the Fas ligand (FasL) surface expression. Interacts with host HCK, LYN, and SRC; these interactions activate the Src family kinases. Interacts with MAP3K5; this interaction inhibits the Fas and TNFR-mediated death signals. Interacts with beta-COP and PTE1. Interacts with human RACK1; this increases Nef phosphorylation by PKC. Interacts with TP53; this interaction decreases the half-life of TP53, protecting the infected cell against p53-mediated apoptosis. In terms of processing, the virion-associated Nef proteins are cleaved by the viral protease to release the soluble C-terminal core protein. Nef is probably cleaved concomitantly with viral structural proteins on maturation of virus particles. Myristoylated. Post-translationally, phosphorylated on serine residues, probably by host PKCdelta and theta.

The protein resides in the host cell membrane. The protein localises to the virion. Its subcellular location is the secreted. It localises to the host Golgi apparatus membrane. In terms of biological role, factor of infectivity and pathogenicity, required for optimal virus replication. Alters numerous pathways of T-lymphocyte function and down-regulates immunity surface molecules in order to evade host defense and increase viral infectivity. Alters the functionality of other immunity cells, like dendritic cells, monocytes/macrophages and NK cells. Functionally, in infected CD4(+) T-lymphocytes, down-regulates the surface MHC-I, mature MHC-II, CD4, CD28, CCR5 and CXCR4 molecules. Mediates internalization and degradation of host CD4 through the interaction of with the cytoplasmic tail of CD4, the recruitment of AP-2 (clathrin adapter protein complex 2), internalization through clathrin coated pits, and subsequent transport to endosomes and lysosomes for degradation. Diverts host MHC-I molecules to the trans-Golgi network-associated endosomal compartments by an endocytic pathway to finally target them for degradation. MHC-I down-regulation may involve AP-1 (clathrin adapter protein complex 1) or possibly Src family kinase-ZAP70/Syk-PI3K cascade recruited by PACS2. In consequence infected cells are masked for immune recognition by cytotoxic T-lymphocytes. Decreasing the number of immune receptors also prevents reinfection by more HIV particles (superinfection). Down-regulates host SERINC3 and SERINC5 thereby excluding these proteins from the viral particles. Virion infectivity is drastically higher when SERINC3 or SERINC5 are excluded from the viral envelope, because these host antiviral proteins impair the membrane fusion event necessary for subsequent virion penetration. Bypasses host T-cell signaling by inducing a transcriptional program nearly identical to that of anti-CD3 cell activation. Interaction with TCR-zeta chain up-regulates the Fas ligand (FasL). Increasing surface FasL molecules and decreasing surface MHC-I molecules on infected CD4(+) cells send attacking cytotoxic CD8+ T-lymphocytes into apoptosis. Its function is as follows. Plays a role in optimizing the host cell environment for viral replication without causing cell death by apoptosis. Protects the infected cells from apoptosis in order to keep them alive until the next virus generation is ready to strike. Inhibits the Fas and TNFR-mediated death signals by blocking MAP3K5/ASK1. Decreases the half-life of TP53, protecting the infected cell against p53-mediated apoptosis. Inhibits the apoptotic signals regulated by the Bcl-2 family proteins through the formation of a Nef/PI3-kinase/PAK2 complex that leads to activation of PAK2 and induces phosphorylation of host BAD. In terms of biological role, extracellular Nef protein targets CD4(+) T-lymphocytes for apoptosis by interacting with CXCR4 surface receptors. The sequence is that of Protein Nef from Homo sapiens (Human).